The sequence spans 494 residues: MRIMAVRLVAGAITLALMAYAWLAWERARDPEPITILERVLERGELRVITRISATTYYQTDKGRAGLEFELAQAFAHRLGVQLRMLVAPDLEAIFAALDDGEADLAAAGLTYTESRGQRYWFTPPYKDITQQLVYRVGTPRPDDLSEIGPGELAVIANSSHADRLRELRNRSHPDLTWAEDEHADSEAMLYRVWNEELRYTVADSHELSINRAYYPELRKAFEISGVEGLAWAFPRTEDLSLYNEAARYFTDLRLEGTLSTLLEEHFGHLGRFDYVGFRAFNRHVADRLPRYRHWFEEAAEEYGVDWRLLAAIGYQESHWDPQAVSPTGVRGIMMLTLDTASMLGVDNRLDPKQSIFGGARYFSRLLERLPEDIEEPHRAWMALAAYNVGYGHLQDARRLARQRGYDPNDWRVIRDHLPLLSQRQWYVQTRHGYARGWEPVHYVRNIRLYYQLLQRITEPGRRQVPAGEALGEPPLPTPPAPPGAPLPADPPAD.

The N-terminal stretch at 1–24 (MRIMAVRLVAGAITLALMAYAWLA) is a signal peptide. The tract at residues 25–270 (WERARDPEPI…TLLEEHFGHL (246 aa)) is non-LT domain. The segment at 271–494 (GRFDYVGFRA…APLPADPPAD (224 aa)) is LT domain. Glu317 is an active-site residue. The disordered stretch occupies residues 464–494 (QVPAGEALGEPPLPTPPAPPGAPLPADPPAD). Residues 474-494 (PPLPTPPAPPGAPLPADPPAD) show a composition bias toward pro residues.

The protein in the N-terminal section; belongs to the bacterial solute-binding protein 3 family. It in the C-terminal section; belongs to the transglycosylase Slt family.

It is found in the cell outer membrane. The catalysed reaction is Exolytic cleavage of the (1-&gt;4)-beta-glycosidic linkage between N-acetylmuramic acid (MurNAc) and N-acetylglucosamine (GlcNAc) residues in peptidoglycan, from either the reducing or the non-reducing ends of the peptidoglycan chains, with concomitant formation of a 1,6-anhydrobond in the MurNAc residue.. Its function is as follows. Murein-degrading enzyme that degrades murein glycan strands and insoluble, high-molecular weight murein sacculi, with the concomitant formation of a 1,6-anhydromuramoyl product. Lytic transglycosylases (LTs) play an integral role in the metabolism of the peptidoglycan (PG) sacculus. Their lytic action creates space within the PG sacculus to allow for its expansion as well as for the insertion of various structures such as secretion systems and flagella. This is Membrane-bound lytic murein transglycosylase F 1 from Alkalilimnicola ehrlichii (strain ATCC BAA-1101 / DSM 17681 / MLHE-1).